Consider the following 302-residue polypeptide: MHLDEGFDDDLDEERVPNLGIVAESISQLGIDVLLSGETGTGKDTIAQRIHTISGRKGRLVAMNCAAIPESLAESELFGVVSPAYTGADRSRVGYIEAAQGGTLYLDEIDSMPLSLQAKLLRVLETRALERLGSTSTIKLDVCVIASAQSSLDDAVEQGKFRRDLYFRLNVLTLQLPPLRTQPERILPLFKRFMAAAAKELNVASADVCPLLQQVLLGHEWPGNIRELKAAAKRHVLGFPVLGVDPQSEEHLACGLKSQLRAIEKALIQQSLKRHRNCIDAASLELDMPRRTLYRRIKELQI.

The Sigma-54 factor interaction domain maps to 9 to 237 (DDLDEERVPN…LKAAAKRHVL (229 aa)). ATP contacts are provided by residues 37-44 (GETGTGKD) and 99-108 (AQGGTLYLDE). Residues 279–298 (IDAASLELDMPRRTLYRRIK) constitute a DNA-binding region (H-T-H motif).

Its function is as follows. Member of the two-component regulatory system HrpR/HrpS that regulates the activation of the sigma factor hrpL which itself induces the expression of hprD as well as other hrp loci which are involved in plant pathogenicity, hrmA and avr genes. Probably interacts with sigma-54. This Pseudomonas savastanoi pv. phaseolicola (Pseudomonas syringae pv. phaseolicola) protein is Pathogenicity locus probable regulatory protein HrpS (hrpS).